We begin with the raw amino-acid sequence, 367 residues long: Chorismate synthase (367 aa).

Position 48 (R48) interacts with NADP(+). Residues 125-127 (RAS), G290, 305-309 (KPTSS), and R333 each bind FMN.

It belongs to the chorismate synthase family. Homotetramer. The cofactor is FMNH2.

It carries out the reaction 5-O-(1-carboxyvinyl)-3-phosphoshikimate = chorismate + phosphate. It participates in metabolic intermediate biosynthesis; chorismate biosynthesis; chorismate from D-erythrose 4-phosphate and phosphoenolpyruvate: step 7/7. Functionally, catalyzes the anti-1,4-elimination of the C-3 phosphate and the C-6 proR hydrogen from 5-enolpyruvylshikimate-3-phosphate (EPSP) to yield chorismate, which is the branch point compound that serves as the starting substrate for the three terminal pathways of aromatic amino acid biosynthesis. This reaction introduces a second double bond into the aromatic ring system. In Protochlamydia amoebophila (strain UWE25), this protein is Chorismate synthase.